Consider the following 430-residue polypeptide: Serine--tRNA ligase (430 aa).

L-serine is bound at residue Thr237–Glu239. Arg268–Glu270 contributes to the ATP binding site. L-serine is bound at residue Glu291. Glu355–Ser358 is an ATP binding site. Position 391 (Ser391) interacts with L-serine.

It belongs to the class-II aminoacyl-tRNA synthetase family. Type-1 seryl-tRNA synthetase subfamily. As to quaternary structure, homodimer. The tRNA molecule binds across the dimer.

The protein localises to the cytoplasm. It catalyses the reaction tRNA(Ser) + L-serine + ATP = L-seryl-tRNA(Ser) + AMP + diphosphate + H(+). It carries out the reaction tRNA(Sec) + L-serine + ATP = L-seryl-tRNA(Sec) + AMP + diphosphate + H(+). Its pathway is aminoacyl-tRNA biosynthesis; selenocysteinyl-tRNA(Sec) biosynthesis; L-seryl-tRNA(Sec) from L-serine and tRNA(Sec): step 1/1. Its function is as follows. Catalyzes the attachment of serine to tRNA(Ser). Is also able to aminoacylate tRNA(Sec) with serine, to form the misacylated tRNA L-seryl-tRNA(Sec), which will be further converted into selenocysteinyl-tRNA(Sec). The chain is Serine--tRNA ligase from Magnetococcus marinus (strain ATCC BAA-1437 / JCM 17883 / MC-1).